Here is a 121-residue protein sequence, read N- to C-terminus: Basic phospholipase A2 homolog GodMT-II (121 aa).

Disulfide bonds link Cys26/Cys115, Cys28/Cys44, Cys43/Cys95, Cys49/Cys121, Cys50/Cys88, Cys57/Cys81, and Cys75/Cys86. The interval 105–117 (KNYKIYPKPLCKK) is important for membrane-damaging activities in eukaryotes and bacteria; heparin-binding.

Belongs to the phospholipase A2 family. Group II subfamily. K49 sub-subfamily. In terms of assembly, monomer. Expressed by the venom gland.

It is found in the secreted. Snake venom phospholipase A2 homolog that lacks enzymatic activity but shows high myotoxic activities. In vivo, induces a mild edema when subcutaneously injected into mice foot pad. In Cerrophidion godmani (Porthidium godmani), this protein is Basic phospholipase A2 homolog GodMT-II.